Consider the following 117-residue polypeptide: Large ribosomal subunit protein bL20 (117 aa).

This sequence belongs to the bacterial ribosomal protein bL20 family.

Functionally, binds directly to 23S ribosomal RNA and is necessary for the in vitro assembly process of the 50S ribosomal subunit. It is not involved in the protein synthesizing functions of that subunit. The sequence is that of Large ribosomal subunit protein bL20 from Limosilactobacillus fermentum (strain NBRC 3956 / LMG 18251) (Lactobacillus fermentum).